A 326-amino-acid chain; its full sequence is G-protein coupled receptor 1 (326 aa).

Residue serine 2 is modified to N-acetylserine. The Extracellular portion of the chain corresponds to 2 to 23 (SAVLTAGGGLTAGDRSIITAIN). A helical transmembrane segment spans residues 24-44 (TGASSLSFVGSAFIVLCYCLF). The Cytoplasmic portion of the chain corresponds to 45–51 (KELRKFS). A helical membrane pass occupies residues 52 to 72 (FKLVFYLALSDMLCSFFLIVG). The Extracellular portion of the chain corresponds to 73 to 84 (DPSKGFICYAQG). A disulfide bond links cysteine 80 and cysteine 151. The chain crosses the membrane as a helical span at residues 85–105 (YTTHFFCVASFLWTTTIAFTL). Over 106 to 120 (HRTVVKHKTDVEDLE) the chain is Cytoplasmic. A helical membrane pass occupies residues 121 to 141 (AMFHLYVWGTSLVVTVIRSFG). Residues 142-160 (NNHSHLGPWCWTQTGLKGK) are Extracellular-facing. N-linked (GlcNAc...) asparagine glycosylation is present at asparagine 143. Residues 161-181 (AVHFLTFYAPLWGAILYNGFT) traverse the membrane as a helical segment. Residues 182-213 (YFQVIRMLRNARRMAVGMSDRVDQFDNRAELK) lie on the Cytoplasmic side of the membrane. A helical membrane pass occupies residues 214-234 (VLNRWGYYPLILIGSWAFGTI). The Extracellular segment spans residues 235–246 (NRIHDFIEPGHK). A helical membrane pass occupies residues 247–267 (IFWLSVLDVGTAALMGLFNSI). Residues 268 to 326 (AYGFNSSVRRAIHERLELFLPERLYRWLPSNFRPKNHLILHQQQQQRSEMVSLKTEDQQ) lie on the Cytoplasmic side of the membrane.

This sequence belongs to the G-protein coupled receptor 2 family. In terms of assembly, interacts with GPA1. As to expression, mostly present in the meristematic regions. Expressed at low levels in seedlings, vascular tissues of cotyledons, hypocotyl, and roots, stems, leaves, flowering buds and siliques. In dark-grown seedlings, localized in the cotyledons and the hook.

It is found in the cell membrane. Its function is as follows. Together with GPA1, may regulate the cell cycle via a signaling cascade that uses phosphatidylinositol-specific phospholipase C (PI-PLC) as an effector and inositol 1,4,5-trisphosphate(IP(3)) as a second messenger. Promotes PI-PLC activity and IP(3) accumulation. Involved in the blue light (BL) signaling. Together with GPA1 and ADT3, required for BL-mediated synthesis of phenylpyruvate and subsequently of phenylalanine (Phe), in etiolated seedlings. Probably involved in cytokinin signal transduction. Plays a positive role in gibberellin- (GA) and brassinosteroid- (BR) regulated seed germination, probably independently of a heterotrimeric G-protein. Mediates seed dormancy abolition, and promotes seed germination and flowering. In Arabidopsis thaliana (Mouse-ear cress), this protein is G-protein coupled receptor 1 (GCR1).